We begin with the raw amino-acid sequence, 442 residues long: Probable D-serine dehydratase (442 aa).

Residue K115 is modified to N6-(pyridoxal phosphate)lysine.

This sequence belongs to the serine/threonine dehydratase family. DsdA subfamily. It depends on pyridoxal 5'-phosphate as a cofactor.

The enzyme catalyses D-serine = pyruvate + NH4(+). The chain is Probable D-serine dehydratase from Halalkalibacterium halodurans (strain ATCC BAA-125 / DSM 18197 / FERM 7344 / JCM 9153 / C-125) (Bacillus halodurans).